The following is a 627-amino-acid chain: (+)-3-carene synthase 1, chloroplastic (627 aa).

A chloroplast-targeting transit peptide spans 1-36 (MSVISIVPLASKPCLYKSFISSTHEPKALRRPISTV). Residues Asp-378, Asp-382, and Asp-530 each coordinate Mg(2+). The short motif at 378-382 (DDMYD) is the DDXXD motif element.

The protein belongs to the terpene synthase family. Tpsd subfamily. Mg(2+) is required as a cofactor. Requires Mn(2+) as cofactor.

It localises to the plastid. The protein localises to the chloroplast. It carries out the reaction (2E)-geranyl diphosphate = (+)-car-3-ene + diphosphate. It functions in the pathway terpene metabolism; oleoresin biosynthesis. Its function is as follows. Terpene synthase (TPS) involved in the biosynthesis of monoterpene natural products included in conifer oleoresin secretions and volatile emissions; these compounds contribute to biotic and abiotic stress defense against herbivores (e.g. insect attack by white pine weevil P.strobi) and pathogens. Catalyzes the conversion of (2E)-geranyl diphosphate (GPP) to (+)-car-3-ene. The chain is (+)-3-carene synthase 1, chloroplastic from Picea sitchensis (Sitka spruce).